Here is a 956-residue protein sequence, read N- to C-terminus: MPRVSAPLVLLPAWLLMVACSPHSLRIAAILDDPMECSRGERLSITLAKNRINRAPERLGKAKVEVDIFELLRDSEYETAETMCQILPKGVVAVLGPSSSPASSSIISNICGEKEVPHFKVAPEEFVRFQLQRFTTLNLHPSNTDISVAVAGILNFFNCTTACLICAKAECLLNLEKLLRQFLISKDTLSVRMLDDTRDPTPLLKEIRDDKTATIIIHANASMSHTILLKAAELGMVSAYYTYIFTNLEFSLQRMDSLVDDRVNILGFSIFNQSHAFFQEFSQSLNQSWQENCDHVPFTGPALSSALLFDAVYAVVTAVQELNRSQEIGVKPLSCGSAQIWQHGTSLMNYLRMVELEGLTGHIEFNSKGQRSNYALKILQFTRNGFRQIGQWHVAEGLSMDSRLYASNISDSLFNTTLVVTTILENPYLMLKGNHQDMEGNDRYEGFCVDMLKELAEILRFNYKIRLVGDGVYGVPEANGTWTGMVGELIARKADLAVAGLTITAEREKVIDFSKPFMTLGISILYRVHMGRRPGYFSSLDPFSPGVWLFMLLAYLAVSCVLFLVARLTPYEWYSPHPCAQGRCNLLVNQYSLGNSLWFPVGGFMQQGSTIAPRALSTRCVSGVWWAFTLIIISSYTANLAAFLTVQRMEVPIESVDDLADQTAIEYGTIHGGSSMTFFQNSRYQTYQRMWNYMYSKQPSVFVKSTEEGIARVLNSNYAFLLESTMNEYYRQRNCNLTQIGGLLDTKGYGIGMPVGSVFRDEFDLAILQLQENNRLEILKRKWWEGGKCPKEEDHRAKGLGMENIGGIFVVLICGLIVAIFMAMLEFLWTLRHSEASEVSVCQEMMTELRSIILCQDNIHPRRRRSGGLPPQPPVLEERRPRGTATLSNGKLCGAGEPDQLAQRLAQEAALVARGCTHIRVCPECRRFQGLRARPSPARSEESLEWDKTTNSSEPE.

The N-terminal stretch at 1 to 20 is a signal peptide; that stretch reads MPRVSAPLVLLPAWLLMVAC. The Extracellular segment spans residues 21 to 545; sequence SPHSLRIAAI…YFSSLDPFSP (525 aa). N-linked (GlcNAc...) asparagine glycosylation is found at N158, N220, N272, N286, N323, N408, N415, and N479. Residues G500, T502, and R507 each coordinate L-glutamate. The helical transmembrane segment at 546–566 threads the bilayer; that stretch reads GVWLFMLLAYLAVSCVLFLVA. The Cytoplasmic segment spans residues 567–623; sequence RLTPYEWYSPHPCAQGRCNLLVNQYSLGNSLWFPVGGFMQQGSTIAPRALSTRCVSG. The helical transmembrane segment at 624–644 threads the bilayer; the sequence is VWWAFTLIIISSYTANLAAFL. Residues 645–804 are Extracellular-facing; the sequence is TVQRMEVPIE…HRAKGLGMEN (160 aa). L-glutamate-binding residues include S674, S675, and E723. N736 carries an N-linked (GlcNAc...) asparagine glycan. A helical membrane pass occupies residues 805 to 825; that stretch reads IGGIFVVLICGLIVAIFMAML. Topologically, residues 826–956 are cytoplasmic; it reads EFLWTLRHSE…DKTTNSSEPE (131 aa). The segment at 931–956 is disordered; that stretch reads LRARPSPARSEESLEWDKTTNSSEPE. The segment covering 939 to 948 has biased composition (basic and acidic residues); sequence RSEESLEWDK.

The protein belongs to the glutamate-gated ion channel (TC 1.A.10.1) family. GRIK4 subfamily. In terms of assembly, homodimer. Can form functional heteromeric receptors with GRIK1, GRIK2 and GRIK3. As to expression, strong expression in hippocampal CA3 pyramidal cells. Low expression in hippocampal dentate granule cells, in layers II, V and VI of the cortex, and in cerebellar Purkinje cells. No expression in the striatum, reticular thalamus, hypothalamus or amygdaloid complex.

It is found in the cell membrane. The protein localises to the postsynaptic cell membrane. Its subcellular location is the presynaptic cell membrane. Its function is as follows. Ionotropic glutamate receptor that functions as a cation-permeable ligand-gated ion channel, gated by L-glutamate and the glutamatergic agonist kainic acid. Cannot form functional channels on its own and shows channel activity only in heteromeric assembly with GRIK1, GRIK2 and GRIK3 subunits. The chain is Glutamate receptor ionotropic, kainate 4 (Grik4) from Rattus norvegicus (Rat).